A 255-amino-acid chain; its full sequence is Acetylglutamate kinase (255 aa).

Substrate is bound by residues 40–41 (GG), R62, and N153.

This sequence belongs to the acetylglutamate kinase family. ArgB subfamily.

Its subcellular location is the cytoplasm. The enzyme catalyses N-acetyl-L-glutamate + ATP = N-acetyl-L-glutamyl 5-phosphate + ADP. It functions in the pathway amino-acid biosynthesis; L-arginine biosynthesis; N(2)-acetyl-L-ornithine from L-glutamate: step 2/4. Catalyzes the ATP-dependent phosphorylation of N-acetyl-L-glutamate. In Bacillus cereus (strain ATCC 10987 / NRS 248), this protein is Acetylglutamate kinase.